The following is a 183-amino-acid chain: UPF0397 protein EF_2154 (183 aa).

5 helical membrane passes run 10-30 (IVAIGIGSAVFVILGRFVVIP), 44-64 (FLALMSVVFGPVAGGLIGLIG), 74-94 (GSAWWSWIICSGIIGIIFGFA), 115-135 (IFQAFGNIVVWGLIAPSLDIL), and 147-167 (QGVFATVSNIVAVGIIGTLLM).

Belongs to the UPF0397 family.

It is found in the cell membrane. This is UPF0397 protein EF_2154 from Enterococcus faecalis (strain ATCC 700802 / V583).